A 375-amino-acid chain; its full sequence is 4,4'-diaponeurosporenoate glycosyltransferase (375 aa).

4 helical membrane passes run 3–23 (WLSRILTVIVTMSMACGALIF), 164–184 (FYEGFSAIFNLMTVVGMNVFS), 277–297 (IMTAIVLWLFGSIASILGLCL), and 330–350 (FSNLLMVCHPLLFMFFTKIFI).

This sequence belongs to the glycosyltransferase 2 family. CrtQ subfamily.

Its subcellular location is the cell membrane. The protein operates within carotenoid biosynthesis; staphyloxanthin biosynthesis; staphyloxanthin from farnesyl diphosphate: step 4/5. Its function is as follows. Catalyzes the glycosylation of 4,4'-diaponeurosporenoate, i.e. the esterification of glucose at the C1'' position with the carboxyl group of 4,4'-diaponeurosporenic acid, to form glycosyl-4,4'-diaponeurosporenoate. This is a step in the biosynthesis of staphyloxanthin, an orange pigment present in most staphylococci strains. The sequence is that of 4,4'-diaponeurosporenoate glycosyltransferase (crtQ) from Staphylococcus aureus (strain USA300).